Reading from the N-terminus, the 246-residue chain is Myelin protein P0 (246 aa).

The first 27 residues, 1–27 (MFRDLKPAYLFCCSVLYAFSVLRPSQG), serve as a signal peptide directing secretion. An Ig-like V-type domain is found at 28-143 (ISVSTHHNLH…VGTSSDVHLT (116 aa)). Over 28 to 150 (ISVSTHHNLH…HLTVYDKIPP (123 aa)) the chain is Extracellular. Cysteines 48 and 125 form a disulfide. A glycan (N-linked (GlcNAc...) (complex) asparagine) is linked at Asn120. The chain crosses the membrane as a helical span at residues 151–178 (VGAGVVSGAIIGTFLGIILLIVGGLYLF). The Cytoplasmic segment spans residues 179 to 246 (RYIVRRRARS…KLSESKRDKK (68 aa)). A disordered region spans residues 200–246 (AERGKVSGKAGTVSKGPVLYATLDQSKSGKGASEKKSKLSESKRDKK). The segment covering 231 to 246 (ASEKKSKLSESKRDKK) has biased composition (basic and acidic residues).

It belongs to the myelin P0 protein family. In terms of processing, N-glycan is sulfated. As to expression, found only in peripheral nervous system Schwann cells.

The protein resides in the cell membrane. Creation of an extracellular membrane face which guides the wrapping process and ultimately compacts adjacent lamellae. This is Myelin protein P0 (mpz) from Heterodontus francisci (Horn shark).